A 478-amino-acid chain; its full sequence is Zinc metalloproteinase/disintegrin (478 aa).

Positions 1–20 (MIQVLLVTICLAAFPYQGSS) are cleaved as a signal peptide. A propeptide spanning residues 21–187 (IILESGNVND…PIKKASHLNL (167 aa)) is cleaved from the precursor. One can recognise a Peptidase M12B domain in the interval 193–389 (RYVEIVIVVD…QKPQCILKKP (197 aa)). Disulfide bonds link Cys304-Cys384, Cys344-Cys368, and Cys346-Cys351. His329 contributes to the Zn(2+) binding site. Glu330 is an active-site residue. Zn(2+) is bound by residues His333 and His339. A propeptide spanning residues 390–408 (LRTDTVSTPVSGNELLEAR) is cleaved from the precursor. The Disintegrin domain occupies 397-478 (TPVSGNELLE…ADCPRNVLYG (82 aa)). 6 disulfides stabilise this stretch: Cys411–Cys420, Cys413–Cys421, Cys426–Cys440, Cys434–Cys464, Cys439–Cys443, and Cys452–Cys471. The propeptide occupies 474–478 (NVLYG).

Belongs to the venom metalloproteinase (M12B) family. P-II subfamily. P-IIa sub-subfamily. The cofactor is Zn(2+). Expressed by the venom gland.

Its subcellular location is the secreted. Snake venom zinc metalloproteinase that causes hemorrhage by provoking the degradation of the sub-endothelial matrix proteins (fibronectin, laminin, type IV collagen, nidogen, and gelatins). Functionally, displays low cytotoxicity. In vitro, inhibits cancer cell migration (human breast cancer cell line MDA-MB-231) with a significant rate after 24 hours of incubation. This Crotalus durissus collilineatus (Brazilian rattlesnake) protein is Zinc metalloproteinase/disintegrin (MPII).